Consider the following 231-residue polypeptide: Ribosyldihydronicotinamide dehydrogenase [quinone] (231 aa).

Residues His12, 18–21 (FNGS), and 104–107 (LYWF) each bind FAD. 127-129 (FDI) lines the substrate pocket. Residues 148–151 (TTGG) and Tyr156 contribute to the FAD site. Zn(2+) is bound by residues His174 and His178. Residue Asp194 participates in FAD binding. At Ser197 the chain carries Phosphoserine. Arg201 is a binding site for FAD. Position 223 (Cys223) interacts with Zn(2+).

This sequence belongs to the NAD(P)H dehydrogenase (quinone) family. As to quaternary structure, homodimer. Requires Zn(2+) as cofactor. The cofactor is FAD.

It is found in the cytoplasm. It catalyses the reaction 1-(beta-D-ribofuranosyl)-1,4-dihydronicotinamide + a quinone + H(+) = beta-nicotinamide D-riboside + a quinol. Its function is as follows. The enzyme apparently serves as a quinone reductase in connection with conjugation reactions of hydroquinones involved in detoxification pathways as well as in biosynthetic processes such as the vitamin K-dependent gamma-carboxylation of glutamate residues in prothrombin synthesis. This chain is Ribosyldihydronicotinamide dehydrogenase [quinone] (Nqo2), found in Mus musculus (Mouse).